We begin with the raw amino-acid sequence, 132 residues long: Small ribosomal subunit protein uS8 (132 aa).

This sequence belongs to the universal ribosomal protein uS8 family. As to quaternary structure, part of the 30S ribosomal subunit. Contacts proteins S5 and S12.

In terms of biological role, one of the primary rRNA binding proteins, it binds directly to 16S rRNA central domain where it helps coordinate assembly of the platform of the 30S subunit. The chain is Small ribosomal subunit protein uS8 from Streptococcus pneumoniae serotype 19F (strain G54).